The following is a 281-amino-acid chain: MHVKRAATAGFCMGVGLALKKLDRELDNNAKDIATLGPIIHNPQVLRRYEQKGVRCYTDPAEARSGQRVVIRAHGIPEETESALAAAGVDLVDATCPKVKRAQLGIARQREKGRTLLLFGEHDHPEVQGLLSYAGEGAVVFGSLEELQNGPLEDDRHYFLAAQTTQDKHAFTSVIEWVRRRFGDHVPVLDTICDATRERQDEAIAIARSVDVMVVVGGFASGNTRRLAEVAQAQGVPTYHVETPDQLPLDAIRGYGAAGLTAGASTPKSIIDETQKLLESL.

Cysteine 12 is a [4Fe-4S] cluster binding site. The (2E)-4-hydroxy-3-methylbut-2-enyl diphosphate site is built by histidine 41 and histidine 74. Positions 41 and 74 each coordinate dimethylallyl diphosphate. Positions 41 and 74 each coordinate isopentenyl diphosphate. Cysteine 96 contacts [4Fe-4S] cluster. Histidine 124 is a binding site for (2E)-4-hydroxy-3-methylbut-2-enyl diphosphate. Histidine 124 is a dimethylallyl diphosphate binding site. Histidine 124 contacts isopentenyl diphosphate. The active-site Proton donor is the glutamate 126. (2E)-4-hydroxy-3-methylbut-2-enyl diphosphate is bound at residue threonine 164. Cysteine 193 is a binding site for [4Fe-4S] cluster. Residues serine 221, asparagine 223, and serine 265 each contribute to the (2E)-4-hydroxy-3-methylbut-2-enyl diphosphate site. 3 residues coordinate dimethylallyl diphosphate: serine 221, asparagine 223, and serine 265. Serine 221, asparagine 223, and serine 265 together coordinate isopentenyl diphosphate.

It belongs to the IspH family. [4Fe-4S] cluster serves as cofactor.

It catalyses the reaction isopentenyl diphosphate + 2 oxidized [2Fe-2S]-[ferredoxin] + H2O = (2E)-4-hydroxy-3-methylbut-2-enyl diphosphate + 2 reduced [2Fe-2S]-[ferredoxin] + 2 H(+). The enzyme catalyses dimethylallyl diphosphate + 2 oxidized [2Fe-2S]-[ferredoxin] + H2O = (2E)-4-hydroxy-3-methylbut-2-enyl diphosphate + 2 reduced [2Fe-2S]-[ferredoxin] + 2 H(+). The protein operates within isoprenoid biosynthesis; dimethylallyl diphosphate biosynthesis; dimethylallyl diphosphate from (2E)-4-hydroxy-3-methylbutenyl diphosphate: step 1/1. Its pathway is isoprenoid biosynthesis; isopentenyl diphosphate biosynthesis via DXP pathway; isopentenyl diphosphate from 1-deoxy-D-xylulose 5-phosphate: step 6/6. In terms of biological role, catalyzes the conversion of 1-hydroxy-2-methyl-2-(E)-butenyl 4-diphosphate (HMBPP) into a mixture of isopentenyl diphosphate (IPP) and dimethylallyl diphosphate (DMAPP). Acts in the terminal step of the DOXP/MEP pathway for isoprenoid precursor biosynthesis. The chain is 4-hydroxy-3-methylbut-2-enyl diphosphate reductase from Oleidesulfovibrio alaskensis (strain ATCC BAA-1058 / DSM 17464 / G20) (Desulfovibrio alaskensis).